The following is a 476-amino-acid chain: Argininosuccinate lyase (476 aa).

Belongs to the lyase 1 family. Argininosuccinate lyase subfamily.

It localises to the cytoplasm. It carries out the reaction 2-(N(omega)-L-arginino)succinate = fumarate + L-arginine. It participates in amino-acid biosynthesis; L-arginine biosynthesis; L-arginine from L-ornithine and carbamoyl phosphate: step 3/3. The sequence is that of Argininosuccinate lyase from Nitrosospira multiformis (strain ATCC 25196 / NCIMB 11849 / C 71).